Here is a 309-residue protein sequence, read N- to C-terminus: MKRKNFTEVSEFIFLGFSSFGKHQITLFVVFLTVYILTLVANIIIVTIICIDHHLHTPMYFFLSMLASSETVYTLVIVPRMLLSLIFHNQPISLAGCATQMFFFVILATNNCFLLTAMGYDRYVAICRPLRYTVIMSKGLCAQLVCGSFGIGLTMAVLHVTAMFNLPFCGTVVDHFFCDIYPVMKLSCIDTTINEIINYGVSSFVIFVPIGLIFISYVLVISSILQIASAEGRKKTFATCVSHLTVVIVHCGCASIAYLKPKSESSIEKDLVLSVTYTIITPLLNPVVYSLRNKEVKDALCRVVGRNIS.

Residues 1–25 (MKRKNFTEVSEFIFLGFSSFGKHQI) lie on the Extracellular side of the membrane. N-linked (GlcNAc...) asparagine glycosylation is present at asparagine 5. A helical membrane pass occupies residues 26–46 (TLFVVFLTVYILTLVANIIIV). The Cytoplasmic segment spans residues 47–54 (TIICIDHH). The helical transmembrane segment at 55-75 (LHTPMYFFLSMLASSETVYTL) threads the bilayer. Topologically, residues 76–99 (VIVPRMLLSLIFHNQPISLAGCAT) are extracellular. A disulfide bridge links cysteine 97 with cysteine 188. Residues 100-120 (QMFFFVILATNNCFLLTAMGY) form a helical membrane-spanning segment. At 121-139 (DRYVAICRPLRYTVIMSKG) the chain is on the cytoplasmic side. The helical transmembrane segment at 140 to 160 (LCAQLVCGSFGIGLTMAVLHV) threads the bilayer. Over 161-196 (TAMFNLPFCGTVVDHFFCDIYPVMKLSCIDTTINEI) the chain is Extracellular. A helical transmembrane segment spans residues 197–216 (INYGVSSFVIFVPIGLIFIS). Residues 217–236 (YVLVISSILQIASAEGRKKT) are Cytoplasmic-facing. A helical membrane pass occupies residues 237–257 (FATCVSHLTVVIVHCGCASIA). Topologically, residues 258–270 (YLKPKSESSIEKD) are extracellular. A helical transmembrane segment spans residues 271–291 (LVLSVTYTIITPLLNPVVYSL). Residues 292-309 (RNKEVKDALCRVVGRNIS) are Cytoplasmic-facing.

It belongs to the G-protein coupled receptor 1 family. In terms of tissue distribution, expressed in both the aorta, the coronary artery and umbilical vein endothelial cells (HUVECs) (at protein level).

It is found in the cell membrane. Olfactory receptor. Activated by the synthetic floral odorant, lyral, and by alpha-cedrene, a sesquiterpene constituent of cedarwood oil. Its activation increases intracellular Ca(2+). Acts as a key regulator of myogenesis through its actions on cell migration and adhesion by activating the Ca(2+)-dependent AKT signal transduction pathway. Also acts as a regulator of angiogenesis. Moreover, plays a role in the regulation of lipid accumulation in hepatocytes via the cAMP-PKA pathway. May be involved in sperm chemotaxis and motility. The polypeptide is Olfactory receptor 10J5 (Homo sapiens (Human)).